A 138-amino-acid chain; its full sequence is MSRLVYFSSVSENTHRFVAKLGLAADRIPLRPTEPFLRAEDEYVLIVPTYGGGNGLGAVPKQVIKFLNDPGNRSLVRGVIAAGNTNFGEAFCIAGDIIAAKCDVPYLYRFELLGTDQDVLRVREGLGRFWLQRSQIPA.

It belongs to the NrdI family.

Probably involved in ribonucleotide reductase function. This is Protein NrdI from Beutenbergia cavernae (strain ATCC BAA-8 / DSM 12333 / CCUG 43141 / JCM 11478 / NBRC 16432 / NCIMB 13614 / HKI 0122).